Consider the following 405-residue polypeptide: N-methyltransferase nanE (405 aa).

Residues 238-239 (GG), aspartate 261, and 290-291 (HH) each bind S-adenosyl-L-methionine.

Belongs to the class I-like SAM-binding methyltransferase superfamily. Cation-independent O-methyltransferase family.

It functions in the pathway secondary metabolite biosynthesis. In terms of biological role, N-methyltransferase; part of the gene cluster that mediates the biosynthesis of the benzazepine alkaloid nanangelenin A which contains an unprecedented 3,4-dihydro-1-benzazepine-2,5-dione-N-prenyl-N-acetoxy-anthranilamide scaffold. The first step of nanangelenin biosynthesis is catalyzed by the indoleamine 2,3-dioxygenase nanC which produces N-formyl-kynurenine through the catabolism of tryptophan. The two-module NRPS nanA then utilizes anthranilate (Ant) and L-kynurenine (L-Kyn) to assemble the dipeptide product nanangelenin B. The first adenylation domain of nanA (A1) loads anthranilate onto the T1 domain, while A2 loads kynurenine, generated through spontaneous nonenzymatic deformylation of the nanC-supplied N-formyl-kynurenine. The peptide bond formation between the tethered amino acids is catalyzed by the first condensation domain (C1) between anthranilate's carbonyl carbon and kynurenine's aliphatic primary amine. The second C domain (C2) catalyzes the final cyclization event between the aromatic amine of kynurenine and the tethered carbonyl carbon, yielding nanangelenin B. The terminal T3 domain enhances the catalytic efficiency of C2, suggesting the T2-tethered Ant-L-Kyn is transferred to T3 prior to cyclization by C2. Once released from nanA, nanangelenin B is then prenylated by the prenyltransferase nanD to form nanangelenin C. Nanangelenin C is then N-hydroxylated by the FAD-dependent monooxygenase nanF and further acetylated by the acetyltransferase nanB to yield nanangelenin F. Finally, the N-methyltransferase nanE methylates the amide nitrogen of 1-benzazepine to convert nanangelenin F into nanangelenin A. NanE is also able to methylate most of the intermediates of the pathway such as nanangelenin B and nanangelenin C to produce nanangelenin D and nanangelenin E, respectively. This is N-methyltransferase nanE from Aspergillus nanangensis.